Here is a 1151-residue protein sequence, read N- to C-terminus: Nardilysin (1151 aa).

The first 20 residues, 1–20 (MLRRVTVAAVCATRRKLCEA), serve as a signal peptide directing secretion. Disordered stretches follow at residues 53-108 (RNKA…KSPS) and 133-207 (MEGK…KKTT). Phosphoserine is present on residues Ser-86, Ser-94, and Ser-96. Positions 141 to 198 (TDDEEEEEVEEEEEDDDEDSGAEIEDDDEEGFDDEDEFDDEHDDDLDTEDNELEELEE) are enriched in acidic residues. Residue His-233 participates in Zn(2+) binding. The active-site Proton acceptor is the Glu-236. His-237 and Glu-314 together coordinate Zn(2+).

Belongs to the peptidase M16 family. In terms of assembly, interacts with BACE1 and NRG1. Zn(2+) is required as a cofactor. In terms of tissue distribution, primarily in adult heart, skeletal muscle, and testis and at much lower levels in other tissues.

The protein resides in the mitochondrion. Its subcellular location is the cell projection. The protein localises to the dendrite. It carries out the reaction Hydrolysis of polypeptides, preferably at -Xaa-|-Arg-Lys-, and less commonly at -Arg-|-Arg-Xaa-, in which Xaa is not Arg or Lys.. Its function is as follows. Cleaves peptide substrates on the N-terminus of arginine residues in dibasic pairs. Is a critical activator of BACE1- and ADAM17-mediated pro-neuregulin ectodomain shedding, involved in the positive regulation of axonal maturation and myelination. Required for proper functioning of 2-oxoglutarate dehydrogenase (OGDH). The polypeptide is Nardilysin (Homo sapiens (Human)).